Consider the following 108-residue polypeptide: MVTQKIYIELKAFDSCLLDRSARSIILTAKRSGARVNGPIFFPRKVMKFIVNRSTHVDKKSREQFEIRTHKRLISLPRANSTIIQALMSLQLPAGVDVKVKVIGGNNG.

It belongs to the universal ribosomal protein uS10 family. In terms of assembly, part of the 30S ribosomal subunit.

Its function is as follows. Involved in the binding of tRNA to the ribosomes. In Ehrlichia canis (strain Jake), this protein is Small ribosomal subunit protein uS10.